The following is a 749-amino-acid chain: Chitin synthase G (749 aa).

5 consecutive transmembrane segments (helical) span residues 40–60 (CVGE…PLPP), 73–93 (VLQW…WLFC), 421–441 (FMQN…ISII), 451–471 (PVGF…YFGI), and 483–503 (LMFI…IFTA). Residues 683–749 (IESGSGIPSG…RRYMQPEQMV (67 aa)) are disordered. Residues 697–718 (LSSSVPQSGMQQSRAVPGNMSQ) show a composition bias toward polar residues. Asparagine 715 carries N-linked (GlcNAc...) asparagine glycosylation. Residues 728-742 (YTKRPSRIPRQKRRY) are compositionally biased toward basic residues.

The protein belongs to the chitin synthase family. Class VI subfamily.

Its subcellular location is the cell membrane. It carries out the reaction [(1-&gt;4)-N-acetyl-beta-D-glucosaminyl](n) + UDP-N-acetyl-alpha-D-glucosamine = [(1-&gt;4)-N-acetyl-beta-D-glucosaminyl](n+1) + UDP + H(+). Polymerizes chitin, a structural polymer of the cell wall and septum, by transferring the sugar moiety of UDP-GlcNAc to the non-reducing end of the growing chitin polymer. Plays an important role in septal growth or maintenance. Mediates colony spore formation. This Aspergillus niger (strain ATCC MYA-4892 / CBS 513.88 / FGSC A1513) protein is Chitin synthase G.